The chain runs to 296 residues: 4-hydroxy-tetrahydrodipicolinate synthase (296 aa).

A pyruvate-binding site is contributed by T49. Y137 functions as the Proton donor/acceptor in the catalytic mechanism. K166 (schiff-base intermediate with substrate) is an active-site residue. I208 lines the pyruvate pocket.

The protein belongs to the DapA family. As to quaternary structure, homotetramer; dimer of dimers.

It is found in the cytoplasm. The enzyme catalyses L-aspartate 4-semialdehyde + pyruvate = (2S,4S)-4-hydroxy-2,3,4,5-tetrahydrodipicolinate + H2O + H(+). The protein operates within amino-acid biosynthesis; L-lysine biosynthesis via DAP pathway; (S)-tetrahydrodipicolinate from L-aspartate: step 3/4. Functionally, catalyzes the condensation of (S)-aspartate-beta-semialdehyde [(S)-ASA] and pyruvate to 4-hydroxy-tetrahydrodipicolinate (HTPA). The chain is 4-hydroxy-tetrahydrodipicolinate synthase from Chlorobium phaeovibrioides (strain DSM 265 / 1930) (Prosthecochloris vibrioformis (strain DSM 265)).